Reading from the N-terminus, the 1039-residue chain is Beta-galactosidase (1039 aa).

2 residues coordinate substrate: Asn-103 and Asp-201. Asp-201 contributes to the Na(+) binding site. Positions 415, 417, and 460 each coordinate Mg(2+). Substrate-binding positions include Glu-460 and 536 to 539 (EYAH). Glu-460 acts as the Proton donor in catalysis. The active-site Nucleophile is the Glu-536. Residue Asn-596 coordinates Mg(2+). Residues Phe-600 and Asn-603 each coordinate Na(+). Substrate is bound by residues Asn-603 and Trp-1012.

Belongs to the glycosyl hydrolase 2 family. Homotetramer. Requires Mg(2+) as cofactor. It depends on Na(+) as a cofactor.

It catalyses the reaction Hydrolysis of terminal non-reducing beta-D-galactose residues in beta-D-galactosides.. Inhibited by zinc, copper and nickel ions. Activated by 2-mercaptoethanol and inhibited by EDTA in vitro. In Pseudoalteromonas haloplanktis (Alteromonas haloplanktis), this protein is Beta-galactosidase (lacZ).